We begin with the raw amino-acid sequence, 482 residues long: tRNA sulfurtransferase (482 aa).

The region spanning 61–165 (LAIRDALTRI…DDRLLLIKGR (105 aa)) is the THUMP domain. Residues 183 to 184 (LI), Lys265, Gly287, and Gln296 each bind ATP. Cys344 and Cys456 form a disulfide bridge. Residues 404–482 (FGPNDVILDI…GFENVKAYRP (79 aa)) enclose the Rhodanese domain. Residue Cys456 is the Cysteine persulfide intermediate of the active site.

It belongs to the ThiI family.

The protein localises to the cytoplasm. The enzyme catalyses [ThiI sulfur-carrier protein]-S-sulfanyl-L-cysteine + a uridine in tRNA + 2 reduced [2Fe-2S]-[ferredoxin] + ATP + H(+) = [ThiI sulfur-carrier protein]-L-cysteine + a 4-thiouridine in tRNA + 2 oxidized [2Fe-2S]-[ferredoxin] + AMP + diphosphate. It catalyses the reaction [ThiS sulfur-carrier protein]-C-terminal Gly-Gly-AMP + S-sulfanyl-L-cysteinyl-[cysteine desulfurase] + AH2 = [ThiS sulfur-carrier protein]-C-terminal-Gly-aminoethanethioate + L-cysteinyl-[cysteine desulfurase] + A + AMP + 2 H(+). It participates in cofactor biosynthesis; thiamine diphosphate biosynthesis. Functionally, catalyzes the ATP-dependent transfer of a sulfur to tRNA to produce 4-thiouridine in position 8 of tRNAs, which functions as a near-UV photosensor. Also catalyzes the transfer of sulfur to the sulfur carrier protein ThiS, forming ThiS-thiocarboxylate. This is a step in the synthesis of thiazole, in the thiamine biosynthesis pathway. The sulfur is donated as persulfide by IscS. The protein is tRNA sulfurtransferase of Salmonella gallinarum (strain 287/91 / NCTC 13346).